The sequence spans 301 residues: Probable 5-dehydro-4-deoxyglucarate dehydratase (301 aa).

The protein belongs to the DapA family.

It carries out the reaction 5-dehydro-4-deoxy-D-glucarate + H(+) = 2,5-dioxopentanoate + CO2 + H2O. The protein operates within carbohydrate acid metabolism; D-glucarate degradation; 2,5-dioxopentanoate from D-glucarate: step 2/2. The sequence is that of Probable 5-dehydro-4-deoxyglucarate dehydratase from Xanthobacter autotrophicus (strain ATCC BAA-1158 / Py2).